Consider the following 219-residue polypeptide: ATP-dependent dethiobiotin synthetase BioD (219 aa).

12–17 (EVGKTY) serves as a coordination point for ATP. A Mg(2+)-binding site is contributed by T16. Residue K37 is part of the active site. Residue S41 coordinates substrate. Residues D52, 114–117 (EGAG), and 174–175 (NC) each bind ATP. D52 and E114 together coordinate Mg(2+).

This sequence belongs to the dethiobiotin synthetase family. Homodimer. It depends on Mg(2+) as a cofactor.

Its subcellular location is the cytoplasm. The catalysed reaction is (7R,8S)-7,8-diammoniononanoate + CO2 + ATP = (4R,5S)-dethiobiotin + ADP + phosphate + 3 H(+). Its pathway is cofactor biosynthesis; biotin biosynthesis; biotin from 7,8-diaminononanoate: step 1/2. Its function is as follows. Catalyzes a mechanistically unusual reaction, the ATP-dependent insertion of CO2 between the N7 and N8 nitrogen atoms of 7,8-diaminopelargonic acid (DAPA, also called 7,8-diammoniononanoate) to form a ureido ring. This chain is ATP-dependent dethiobiotin synthetase BioD, found in Francisella tularensis subsp. holarctica (strain FTNF002-00 / FTA).